The chain runs to 165 residues: Ubiquitin-fold modifier-conjugating enzyme 1 (165 aa).

Cys-116 acts as the Glycyl thioester intermediate in catalysis.

It belongs to the ubiquitin-conjugating enzyme family. UFC1 subfamily.

In terms of biological role, E2-like enzyme which forms an intermediate with UFM1 via a thioester linkage. The chain is Ubiquitin-fold modifier-conjugating enzyme 1 from Drosophila mojavensis (Fruit fly).